The following is a 70-amino-acid chain: SPbeta prophage-derived uncharacterized protein YorZ (70 aa).

In Bacillus subtilis (strain 168), this protein is SPbeta prophage-derived uncharacterized protein YorZ (yorZ).